Reading from the N-terminus, the 102-residue chain is Protein CASC2, isoform 3 (102 aa).

In terms of tissue distribution, expressed in normal and neoplastic endometrial tissues.

May act as a potential tumor suppressor. The sequence is that of Protein CASC2, isoform 3 (CASC2) from Homo sapiens (Human).